A 257-amino-acid polypeptide reads, in one-letter code: Imidazole glycerol phosphate synthase subunit HisF (257 aa).

Active-site residues include Asp-12 and Asp-131.

The protein belongs to the HisA/HisF family. As to quaternary structure, heterodimer of HisH and HisF.

The protein resides in the cytoplasm. It carries out the reaction 5-[(5-phospho-1-deoxy-D-ribulos-1-ylimino)methylamino]-1-(5-phospho-beta-D-ribosyl)imidazole-4-carboxamide + L-glutamine = D-erythro-1-(imidazol-4-yl)glycerol 3-phosphate + 5-amino-1-(5-phospho-beta-D-ribosyl)imidazole-4-carboxamide + L-glutamate + H(+). It functions in the pathway amino-acid biosynthesis; L-histidine biosynthesis; L-histidine from 5-phospho-alpha-D-ribose 1-diphosphate: step 5/9. IGPS catalyzes the conversion of PRFAR and glutamine to IGP, AICAR and glutamate. The HisF subunit catalyzes the cyclization activity that produces IGP and AICAR from PRFAR using the ammonia provided by the HisH subunit. The polypeptide is Imidazole glycerol phosphate synthase subunit HisF (Burkholderia thailandensis (strain ATCC 700388 / DSM 13276 / CCUG 48851 / CIP 106301 / E264)).